The sequence spans 296 residues: tRNA uridine(34) hydroxylase (296 aa).

The Rhodanese domain occupies 121–215 (AQPDVAVIDT…YLEDIPQDQS (95 aa)). Cys175 functions as the Cysteine persulfide intermediate in the catalytic mechanism.

This sequence belongs to the TrhO family.

The enzyme catalyses uridine(34) in tRNA + AH2 + O2 = 5-hydroxyuridine(34) in tRNA + A + H2O. Catalyzes oxygen-dependent 5-hydroxyuridine (ho5U) modification at position 34 in tRNAs. The sequence is that of tRNA uridine(34) hydroxylase from Roseobacter denitrificans (strain ATCC 33942 / OCh 114) (Erythrobacter sp. (strain OCh 114)).